A 235-amino-acid polypeptide reads, in one-letter code: uncharacterized protein (235 aa).

The N-terminal stretch at M1–A24 is a signal peptide.

This is an uncharacterized protein from Haemophilus influenzae (strain ATCC 51907 / DSM 11121 / KW20 / Rd).